Reading from the N-terminus, the 390-residue chain is Galactokinase (390 aa).

34-37 (EHTD) serves as a coordination point for substrate. ATP-binding positions include Ser-68 and 122–128 (GSGLSSS). 2 residues coordinate Mg(2+): Ser-128 and Glu-160. Asp-172 functions as the Proton acceptor in the catalytic mechanism. Position 221 (Tyr-221) interacts with substrate.

This sequence belongs to the GHMP kinase family. GalK subfamily.

The protein localises to the cytoplasm. The enzyme catalyses alpha-D-galactose + ATP = alpha-D-galactose 1-phosphate + ADP + H(+). It participates in carbohydrate metabolism; galactose metabolism. Catalyzes the transfer of the gamma-phosphate of ATP to D-galactose to form alpha-D-galactose-1-phosphate (Gal-1-P). This Chloroflexus aggregans (strain MD-66 / DSM 9485) protein is Galactokinase.